The primary structure comprises 464 residues: DNA primase DnaG (464 aa).

A Toprim domain is found at 198 to 272 (DSIIVVEGRA…DVDYVARAPE (75 aa)). Mg(2+) is bound by residues glutamate 204, aspartate 246, and aspartate 248. The segment covering 315–333 (RESEGERQPRQVTKPEPEV) has biased composition (basic and acidic residues). Positions 315–351 (RESEGERQPRQVTKPEPEVVKAQPKAETPEEKREPAT) are disordered.

Belongs to the archaeal DnaG primase family. As to quaternary structure, forms a ternary complex with MCM helicase and DNA. Component of the archaeal exosome complex. Mg(2+) serves as cofactor.

It carries out the reaction ssDNA + n NTP = ssDNA/pppN(pN)n-1 hybrid + (n-1) diphosphate.. In terms of biological role, RNA polymerase that catalyzes the synthesis of short RNA molecules used as primers for DNA polymerase during DNA replication. Also part of the exosome, which is a complex involved in RNA degradation. Acts as a poly(A)-binding protein that enhances the interaction between heteromeric, adenine-rich transcripts and the exosome. This chain is DNA primase DnaG, found in Thermococcus kodakarensis (strain ATCC BAA-918 / JCM 12380 / KOD1) (Pyrococcus kodakaraensis (strain KOD1)).